Here is a 216-residue protein sequence, read N- to C-terminus: tRNA (guanine-N(7)-)-methyltransferase (216 aa).

Residues Glu-43, Asp-68, Asn-95, and Asn-117 each contribute to the S-adenosyl-L-methionine site. Substrate contacts are provided by residues Asp-153 and 190–193 (TEYE).

Belongs to the class I-like SAM-binding methyltransferase superfamily. TrmB family.

The catalysed reaction is guanosine(46) in tRNA + S-adenosyl-L-methionine = N(7)-methylguanosine(46) in tRNA + S-adenosyl-L-homocysteine. It participates in tRNA modification; N(7)-methylguanine-tRNA biosynthesis. In terms of biological role, catalyzes the formation of N(7)-methylguanine at position 46 (m7G46) in tRNA. In Desulfitobacterium hafniense (strain Y51), this protein is tRNA (guanine-N(7)-)-methyltransferase.